A 496-amino-acid polypeptide reads, in one-letter code: MKVLQFNQDATCCVVAASSHQISIFNCDPFGKCFEIDTKNSKKKTSNNNGSASNSESRNNEESILITNGSRDRTDAEEEEDNEDNALVTGNILKEGEFVIEMLFSTSLIAIADRGQGLNKGKKLKIVNTKRKCTICEIVFPHEIVDVVMNRKRMCVLLESDQIFIYDISCMKPLETIDLWEDHYKRSQANSFSNASNTGTLEGDSANLNRVATNLLANATQKSVNGSNPSVRTRRNSLRSKIRPRMVLSNDDRSILCFTAYSSPKKNKPNSEALYDVVIYDTLNVTPVNYLNSVHKGNVACLAVSHDGKLLATASDKGTIIRVFHTGVDSDYMSSRSLFKEFRRGTRLCNLYQLAFDKSMTMIGCVGDTDTIHLFKLDDASNSLPGDNSSNGHWNEEEYILASNSNPSMGTPKEIPLSKPRIANYFSKKIKSSIPNQNLSRNFAYITVNESNRSCLGFPDEFPNQVYIASDDGTFSIYSIPSKPGECVLTKNNKFT.

The segment at 41–86 (SKKKTSNNNGSASNSESRNNEESILITNGSRDRTDAEEEEDNEDNA) is disordered. Positions 46–57 (SNNNGSASNSES) are enriched in low complexity. The segment covering 75-84 (DAEEEEDNED) has biased composition (acidic residues). Thr213 carries the post-translational modification Phosphothreonine. Phosphoserine is present on Ser237. WD repeat units lie at residues 294–334 (VHKG…DYMS), 346–385 (TRLC…NSLP), and 448–488 (VNES…GECV). Residues 342–346 (FRRGT) carry the L/FRRG motif motif.

It belongs to the WD repeat PROPPIN family.

It is found in the cytoplasm. The protein resides in the vacuole. In terms of biological role, required for cytoplasm to vacuole transport (Cvt) vesicles formation and mitophagy. Involved in binding of phosphatidylethanolamine to ATG8 and in recruitment of ATG8 and ATG5 to the pre-autophagosomal structure. Protects ATG8 from ARG4-mediated cleavage. Essential for maturation of proaminopeptidase I. The protein is Autophagy-related protein 21 (ATG21) of Saccharomyces cerevisiae (strain ATCC 204508 / S288c) (Baker's yeast).